We begin with the raw amino-acid sequence, 596 residues long: uncharacterized protein (596 aa).

Residues 1–31 (MSTSNDPVVSSHDPIKQEKEQETDLEAQVEH) are disordered. Residues 1–37 (MSTSNDPVVSSHDPIKQEKEQETDLEAQVEHKKRNER) lie on the Cytoplasmic side of the membrane. A compositionally biased stretch (basic and acidic residues) spans 13-22 (DPIKQEKEQE). Residues 38 to 58 (GNAFVGFLILIFVYYLLRGGS) form a helical membrane-spanning segment. Over 59–596 (NDNDKQEMSH…ILVSDSGEEA (538 aa)) the chain is Lumenal. N-linked (GlcNAc...) asparagine glycosylation occurs at Asn118. Residue His197 participates in Zn(2+) binding. The active site involves Asp199. Asp232 provides a ligand contact to Zn(2+). Residue Glu266 is the Proton acceptor of the active site. Positions 267 and 295 each coordinate Zn(2+). N-linked (GlcNAc...) asparagine glycans are attached at residues Asn466, Asn541, and Asn555. His565 serves as a coordination point for Zn(2+).

The protein belongs to the peptidase M20A family. It depends on Zn(2+) as a cofactor.

The protein resides in the vacuole membrane. This is an uncharacterized protein from Schizosaccharomyces pombe (strain 972 / ATCC 24843) (Fission yeast).